Here is a 476-residue protein sequence, read N- to C-terminus: ATP synthase subunit beta, chloroplastic (476 aa).

156 to 163 (GGAGVGKT) contributes to the ATP binding site.

This sequence belongs to the ATPase alpha/beta chains family. In terms of assembly, F-type ATPases have 2 components, CF(1) - the catalytic core - and CF(0) - the membrane proton channel. CF(1) has five subunits: alpha(3), beta(3), gamma(1), delta(1), epsilon(1). CF(0) has four main subunits: a(1), b(1), b'(1) and c(9-12).

The protein resides in the plastid. Its subcellular location is the chloroplast thylakoid membrane. It carries out the reaction ATP + H2O + 4 H(+)(in) = ADP + phosphate + 5 H(+)(out). In terms of biological role, produces ATP from ADP in the presence of a proton gradient across the membrane. The catalytic sites are hosted primarily by the beta subunits. This chain is ATP synthase subunit beta, chloroplastic, found in Fucus vesiculosus (Bladder wrack).